The chain runs to 75 residues: uncharacterized protein (75 aa).

Residues 1 to 18 (MRKYLSARSMCCSFFSCA) form the signal peptide.

This is an uncharacterized protein from Treponema pallidum (strain Nichols).